Consider the following 345-residue polypeptide: Ferrochelatase (345 aa).

Positions 215 and 296 each coordinate Fe cation.

This sequence belongs to the ferrochelatase family.

Its subcellular location is the cytoplasm. The enzyme catalyses heme b + 2 H(+) = protoporphyrin IX + Fe(2+). Its pathway is porphyrin-containing compound metabolism; protoheme biosynthesis; protoheme from protoporphyrin-IX: step 1/1. Functionally, catalyzes the ferrous insertion into protoporphyrin IX. Essential for normal nodule development. This is Ferrochelatase from Bradyrhizobium diazoefficiens (strain JCM 10833 / BCRC 13528 / IAM 13628 / NBRC 14792 / USDA 110).